Here is a 652-residue protein sequence, read N- to C-terminus: DNA ligase (652 aa).

Residues 29-33 (DSDYD), 78-79 (SL), and Glu-107 contribute to the NAD(+) site. Lys-109 acts as the N6-AMP-lysine intermediate in catalysis. Residues Arg-130, Glu-164, Lys-278, and Lys-302 each contribute to the NAD(+) site. 4 residues coordinate Zn(2+): Cys-395, Cys-398, Cys-413, and Cys-418. The BRCT domain occupies 577–652 (NSDAALFGLT…IEDEDWLRQL (76 aa)).

Belongs to the NAD-dependent DNA ligase family. LigA subfamily. Mg(2+) serves as cofactor. Requires Mn(2+) as cofactor.

It carries out the reaction NAD(+) + (deoxyribonucleotide)n-3'-hydroxyl + 5'-phospho-(deoxyribonucleotide)m = (deoxyribonucleotide)n+m + AMP + beta-nicotinamide D-nucleotide.. Its function is as follows. DNA ligase that catalyzes the formation of phosphodiester linkages between 5'-phosphoryl and 3'-hydroxyl groups in double-stranded DNA using NAD as a coenzyme and as the energy source for the reaction. It is essential for DNA replication and repair of damaged DNA. This Streptococcus pyogenes serotype M12 (strain MGAS2096) protein is DNA ligase.